The chain runs to 341 residues: Glyceraldehyde-3-phosphate dehydrogenase 2 (341 aa).

Residues 13-14 (RI), D35, and R85 each bind NAD(+). D-glyceraldehyde 3-phosphate is bound by residues 157 to 159 (SCT), T188, 217 to 218 (TG), and R240. C158 serves as the catalytic Nucleophile. N322 contacts NAD(+).

This sequence belongs to the glyceraldehyde-3-phosphate dehydrogenase family. As to quaternary structure, homotetramer.

It localises to the cytoplasm. It catalyses the reaction D-glyceraldehyde 3-phosphate + phosphate + NAD(+) = (2R)-3-phospho-glyceroyl phosphate + NADH + H(+). It participates in carbohydrate degradation; glycolysis; pyruvate from D-glyceraldehyde 3-phosphate: step 1/5. In Caenorhabditis elegans, this protein is Glyceraldehyde-3-phosphate dehydrogenase 2 (gpd-2).